We begin with the raw amino-acid sequence, 634 residues long: Biosynthetic arginine decarboxylase (634 aa).

Lys-103 bears the N6-(pyridoxal phosphate)lysine mark. Residue 283 to 293 participates in substrate binding; it reads FDVGGGLGVDY.

This sequence belongs to the Orn/Lys/Arg decarboxylase class-II family. SpeA subfamily. Requires Mg(2+) as cofactor. Pyridoxal 5'-phosphate serves as cofactor.

The catalysed reaction is L-arginine + H(+) = agmatine + CO2. It participates in amine and polyamine biosynthesis; agmatine biosynthesis; agmatine from L-arginine: step 1/1. Functionally, catalyzes the biosynthesis of agmatine from arginine. This is Biosynthetic arginine decarboxylase from Photorhabdus laumondii subsp. laumondii (strain DSM 15139 / CIP 105565 / TT01) (Photorhabdus luminescens subsp. laumondii).